The chain runs to 75 residues: Acyl carrier protein (75 aa).

A Carrier domain is found at 1–75; that stretch reads MALFDDVKEV…GDAIKFIENV (75 aa). S36 is subject to O-(pantetheine 4'-phosphoryl)serine.

It belongs to the acyl carrier protein (ACP) family. In terms of processing, 4'-phosphopantetheine is transferred from CoA to a specific serine of apo-ACP by AcpS. This modification is essential for activity because fatty acids are bound in thioester linkage to the sulfhydryl of the prosthetic group.

Its subcellular location is the cytoplasm. It functions in the pathway lipid metabolism; fatty acid biosynthesis. Its function is as follows. Carrier of the growing fatty acid chain in fatty acid biosynthesis. This chain is Acyl carrier protein, found in Sulfurovum sp. (strain NBC37-1).